Consider the following 346-residue polypeptide: Holliday junction branch migration complex subunit RuvB (346 aa).

The segment at 1–181 (MSDRNPLIDA…FGIPTRLNFY (181 aa)) is large ATPase domain (RuvB-L). Residues Leu-20, Arg-21, Gly-62, Lys-65, Thr-66, Thr-67, 128–130 (EDF), Arg-171, Tyr-181, and Arg-218 contribute to the ATP site. Position 66 (Thr-66) interacts with Mg(2+). Residues 182 to 252 (TVEELEYIVR…IADEALSRLE (71 aa)) form a small ATPAse domain (RuvB-S) region. The tract at residues 255-346 (NRGLDQLDRR…SQYGLFMEDE (92 aa)) is head domain (RuvB-H). Positions 291, 310, and 315 each coordinate DNA.

This sequence belongs to the RuvB family. In terms of assembly, homohexamer. Forms an RuvA(8)-RuvB(12)-Holliday junction (HJ) complex. HJ DNA is sandwiched between 2 RuvA tetramers; dsDNA enters through RuvA and exits via RuvB. An RuvB hexamer assembles on each DNA strand where it exits the tetramer. Each RuvB hexamer is contacted by two RuvA subunits (via domain III) on 2 adjacent RuvB subunits; this complex drives branch migration. In the full resolvosome a probable DNA-RuvA(4)-RuvB(12)-RuvC(2) complex forms which resolves the HJ.

Its subcellular location is the cytoplasm. It catalyses the reaction ATP + H2O = ADP + phosphate + H(+). The RuvA-RuvB-RuvC complex processes Holliday junction (HJ) DNA during genetic recombination and DNA repair, while the RuvA-RuvB complex plays an important role in the rescue of blocked DNA replication forks via replication fork reversal (RFR). RuvA specifically binds to HJ cruciform DNA, conferring on it an open structure. The RuvB hexamer acts as an ATP-dependent pump, pulling dsDNA into and through the RuvAB complex. RuvB forms 2 homohexamers on either side of HJ DNA bound by 1 or 2 RuvA tetramers; 4 subunits per hexamer contact DNA at a time. Coordinated motions by a converter formed by DNA-disengaged RuvB subunits stimulates ATP hydrolysis and nucleotide exchange. Immobilization of the converter enables RuvB to convert the ATP-contained energy into a lever motion, pulling 2 nucleotides of DNA out of the RuvA tetramer per ATP hydrolyzed, thus driving DNA branch migration. The RuvB motors rotate together with the DNA substrate, which together with the progressing nucleotide cycle form the mechanistic basis for DNA recombination by continuous HJ branch migration. Branch migration allows RuvC to scan DNA until it finds its consensus sequence, where it cleaves and resolves cruciform DNA. The chain is Holliday junction branch migration complex subunit RuvB from Brucella anthropi (strain ATCC 49188 / DSM 6882 / CCUG 24695 / JCM 21032 / LMG 3331 / NBRC 15819 / NCTC 12168 / Alc 37) (Ochrobactrum anthropi).